A 299-amino-acid polypeptide reads, in one-letter code: Zinc-alpha-2-glycoprotein (299 aa).

The signal sequence occupies residues 1–17; it reads MVPVLLALLLLLGPAVS. N-linked (GlcNAc...) asparagine glycosylation is found at Asn-24, Asn-125, and Asn-256. Disulfide bonds link Cys-120/Cys-183 and Cys-222/Cys-277. Residues 204-289 enclose the Ig-like C1-type domain; it reads PSVSVTGHAA…EHRSLTRPLT (86 aa).

The protein belongs to the MHC class I family. Interacts with PIP.

It is found in the secreted. In terms of biological role, stimulates lipid degradation in adipocytes and causes the extensive fat losses associated with some advanced cancers. This is Zinc-alpha-2-glycoprotein (AZGP1) from Bos taurus (Bovine).